A 73-amino-acid polypeptide reads, in one-letter code: Alternative prion protein (73 aa).

The chain crosses the membrane as a helical span at residues 32–52 (WWWLGAASWWWLGAAPWWWLG).

In terms of tissue distribution, detected in brain homogenate, primary neurons, and peripheral blood mononuclear cells (at protein level).

It is found in the mitochondrion outer membrane. The polypeptide is Alternative prion protein (PRNP) (Homo sapiens (Human)).